The chain runs to 170 residues: Cathelicidin antimicrobial peptide (170 aa).

A signal peptide spans 1 to 30 (MKTQMDGHSLGRWSLVLLLLGLVMPLAIVA). Positions 31 to 131 (QVLSYKEAVL…DISCDKDNRR (101 aa)) are cleaved as a propeptide — cathelin-like domain (CLD). Disulfide bonds link Cys86-Cys97 and Cys108-Cys125. An active core region spans residues 150–162 (FKRIVQRIKDFLR).

It belongs to the cathelicidin family. As to quaternary structure, monomer, homodimer or homotrimer (in vitro). Oligomerizes as tetra- or hexamer in solution (in vitro). Proteolytically cleaved by proteinase PRTN3 into antibacterial peptide LL-37. Proteolytically cleaved by cathepsin CTSG and neutrophil elastase ELANE. In terms of processing, resistant to proteolytic degradation in solution, and when bound to both zwitterionic (mimicking mammalian membranes) and negatively charged membranes (mimicking bacterial membranes). Post-translationally, after secretion onto the skin surface, the CAMP gene product is processed by a serine protease-dependent mechanism into multiple novel antimicrobial peptides distinct from and shorter than cathelicidin LL-37. These peptides show enhanced antimicrobial action, acquiring the ability to kill skin pathogens such as S.aureus, E.coli and C.albicans. These peptides have lost the ability to stimulate CXCL8/IL8 release from keratinocytes. The peptides act synergistically, killing bacteria at lower concentrations when present together, and maintain activity at increased salt condition.

It localises to the secreted. The protein localises to the vesicle. Antimicrobial protein that is an integral component of the innate immune system. Binds to bacterial lipopolysaccharides (LPS). Acts via neutrophil N-formyl peptide receptors to enhance the release of CXCL2. Postsecretory processing generates multiple cathelicidin antimicrobial peptides with various lengths which act as a topical antimicrobial defense in sweat on skin. The unprocessed precursor form, cathelicidin antimicrobial peptide, inhibits the growth of Gram-negative E.coli and E.aerogenes with efficiencies comparable to that of the mature peptide LL-37 (in vitro). In terms of biological role, antimicrobial peptide that is an integral component of the innate immune system. Binds to bacterial lipopolysaccharides (LPS). Causes membrane permeabilization by forming transmembrane pores (in vitro). Causes lysis of E.coli. Exhibits antimicrobial activity against Gram-negative bacteria such as P.aeruginosa, S.typhimurium, E.aerogenes, E.coli and P.syringae, Gram-positive bacteria such as L.monocytogenes, S.epidermidis, S.pyogenes and S.aureus, as well as vancomycin-resistant enterococci (in vitro). Exhibits antimicrobial activity against methicillin-resistant S.aureus, P.mirabilis, and C.albicans in low-salt media, but not in media containing 100 mM NaCl (in vitro). Forms chiral supramolecular assemblies with quinolone signal (PQS) molecules of P.aeruginosa, which may lead to interference of bacterial quorum signaling and perturbance of bacterial biofilm formation. May form supramolecular fiber-like assemblies on bacterial membranes. Induces cytokine and chemokine producation as well as TNF/TNFA and CSF2/GMCSF production in normal human keratinocytes. Exhibits hemolytic activity against red blood cells. Its function is as follows. Exhibits antimicrobial activity against E.coli and B.megaterium (in vitro). The protein is Cathelicidin antimicrobial peptide of Pongo pygmaeus (Bornean orangutan).